The primary structure comprises 182 residues: Probable RNA 2'-phosphotransferase (182 aa).

The protein belongs to the KptA/TPT1 family.

Its function is as follows. Removes the 2'-phosphate from RNA via an intermediate in which the phosphate is ADP-ribosylated by NAD followed by a presumed transesterification to release the RNA and generate ADP-ribose 1''-2''-cyclic phosphate (APPR&gt;P). May function as an ADP-ribosylase. This Flavobacterium johnsoniae (strain ATCC 17061 / DSM 2064 / JCM 8514 / BCRC 14874 / CCUG 350202 / NBRC 14942 / NCIMB 11054 / UW101) (Cytophaga johnsonae) protein is Probable RNA 2'-phosphotransferase.